The chain runs to 348 residues: Centromere protein N-B (348 aa).

This sequence belongs to the CENP-N/CHL4 family.

The protein localises to the nucleus. It is found in the chromosome. It localises to the centromere. In terms of biological role, probable component of a centromeric complex involved in assembly of kinetochore proteins, mitotic progression and chromosome segregation. This Xenopus laevis (African clawed frog) protein is Centromere protein N-B (cenpn-b).